Here is a 249-residue protein sequence, read N- to C-terminus: MSDSASPIFVEYRNTDLLLSPSSAHVYYLPVSSDKHIMLTASTTMGAVPLTTSTTPLVSSTVHQTVFRLRFDSAVTRLTPVTTTTSVTTGTLPWYIYQTPLVEIINTTRVTIGAPYDCDGFFWGRELRPNPDISGVGVVFAFMLSAWLVWLITVYAFARGQIDASQVTSADTRFFRVQVKSSGWRWSSVFLRAILVFSDQQLVTGIAIMIATFASCQDISVWHYAFAVSLAWVSHQHYCSLKTQHCVLD.

Asn-106 is a glycosylation site (N-linked (GlcNAc...) asparagine). Residues 138-158 (VVFAFMLSAWLVWLITVYAFA) traverse the membrane as a helical segment.

The protein localises to the membrane. Part of the gene cluster that mediates the biosynthesis of elsinochromes, pigments consisting of at least four interconvertible tautomers (A, B, C and D) that have a core phenolic quinone to which various side chains are attached and which play an important role in fungal pathogenesis. The non-reducing polyketide synthase PKS1 was proposed to iteratively catalyze decarboxylation between acetyl-CoA and malonyl-CoA subunits for polyketide chain elongation. The released polyketide undergoes cyclization to form an aromatic ring, and proceeds via serial modification steps to produce the heptaketide back- bone of elsinochrome. As elsinochrome has a symmetrical structure, two identical heptaketides are fused to form a core 1,2-dihydrobenzo-perylene ring structure, which can then be successively modified to produce the various derivatives of elsinochrome. Some of these reactions may be cooperatively carried out, at least in part, by the products of RDT1, OXR1 and PKS1. PRF1, embedded within the elsinochrome cluster possibly functions to stabilize some of the biosynthetic enzymes required for elsinochrome production. As prefoldin is a hexamer containing 2 a and 4 b subunits, additional prefoldin subunits, whose coding genes may not immediately link to the elsinochrome biosynthetic gene cluster, are required to fulfill the chaperone function. In addition, no methyltransferase-coding gene exists within the biosynthetic gene cluster, even though elsinochrome has four methyl groups at positions C3, C7, C8 and C12. Apparently, the identified gene cluster does not contain the entire entourage of genes responsible for elsinochrome biosynthesis. Once elsinochrome is synthesized, it must be exported outside the fungal cells, which is probably accomplished by the ECT1 transporter, to avoid toxicity. This chain is Elsinochromes biosynthesis cluster protein HP3, found in Elsinoe fawcettii (Citrus scab fungus).